A 776-amino-acid chain; its full sequence is 5-methyltetrahydropteroyltriglutamate--homocysteine methyltransferase (776 aa).

Residues 16 to 19 (RELK) and K112 contribute to the 5-methyltetrahydropteroyltri-L-glutamate site. Residues 432-434 (IGS) and E485 each bind L-homocysteine. L-methionine contacts are provided by residues 432–434 (IGS) and E485. 5-methyltetrahydropteroyltri-L-glutamate contacts are provided by residues 516-517 (RC) and W562. D600 provides a ligand contact to L-homocysteine. An L-methionine-binding site is contributed by D600. Position 606 (E606) interacts with 5-methyltetrahydropteroyltri-L-glutamate. 3 residues coordinate Zn(2+): H642, C644, and E666. The active-site Proton donor is H695. C727 contacts Zn(2+). Residues 755–776 (HAGAVHAGTPATRAEHAESALA) form a disordered region. Positions 767-776 (RAEHAESALA) are enriched in basic and acidic residues.

The protein belongs to the vitamin-B12 independent methionine synthase family. It depends on Zn(2+) as a cofactor.

The enzyme catalyses 5-methyltetrahydropteroyltri-L-glutamate + L-homocysteine = tetrahydropteroyltri-L-glutamate + L-methionine. It functions in the pathway amino-acid biosynthesis; L-methionine biosynthesis via de novo pathway; L-methionine from L-homocysteine (MetE route): step 1/1. In terms of biological role, catalyzes the transfer of a methyl group from 5-methyltetrahydrofolate to homocysteine resulting in methionine formation. This Ralstonia nicotianae (strain ATCC BAA-1114 / GMI1000) (Ralstonia solanacearum) protein is 5-methyltetrahydropteroyltriglutamate--homocysteine methyltransferase.